A 354-amino-acid polypeptide reads, in one-letter code: Coiled-coil domain-containing protein 86 (354 aa).

The segment at 1–354 (MDTPLRRSRR…QPPQRPATKV (354 aa)) is disordered. S18 and S24 each carry phosphoserine. Positions 31–44 (VLVEFESNPKETGE) are enriched in basic and acidic residues. A phosphoserine mark is found at S47 and S53. Residues 49–58 (PGLGSPSRQP) are compositionally biased toward low complexity. Residue T60 is modified to Phosphothreonine. S61, S64, S75, S86, S105, S108, S123, and S183 each carry phosphoserine. Residues 97–107 (FPQNQPESSPE) are compositionally biased toward polar residues. The segment covering 199-211 (PAREGPAPKKREG) has biased composition (basic and acidic residues). 2 positions are modified to phosphoserine: S212 and S213. The span at 232–248 (GKPKSGRVWKDRSKKRF) shows a compositional bias: basic residues. Composition is skewed to basic and acidic residues over residues 267-289 (DRQE…ERRR) and 297-311 (AENL…RKAE). A coiled-coil region spans residues 274–317 (AKDFARHLEEEKERRRQEKKKRRAENLRRRLENERKAEIVQVIR). Over residues 320–330 (AKLKRAKKKQL) the composition is skewed to basic residues. Position 336 is a citrulline (R336).

Citrullinated by PADI4.

Its subcellular location is the nucleus. It is found in the chromosome. The protein localises to the nucleolus. Functionally, required for proper chromosome segregation during mitosis and error-free mitotic progression. In Bos taurus (Bovine), this protein is Coiled-coil domain-containing protein 86.